A 227-amino-acid polypeptide reads, in one-letter code: MATWSNLSLQDGASPLMEQLSFFHDHTMIDLLLITMIVGYSLSYMLLTKYTNRNMLHGHLIETIWTALPAITLIFIALPSLRLLYLLDDSSDAMITIKTIGRQWYWSYEYSDFINVEFDTYMTPENELNTDEFRLLEVDNRTTLPMNTEVRVLTSASDVLHSWAVPALVLKIDATPGRLNQGMFMINRPGLFFGQCSEICGANHSFMPIVIESTSIKLFIKWLSNMM.

Topologically, residues 1-26 (MATWSNLSLQDGASPLMEQLSFFHDH) are mitochondrial intermembrane. Residues 27 to 48 (TMIDLLLITMIVGYSLSYMLLT) traverse the membrane as a helical segment. Over 49–62 (KYTNRNMLHGHLIE) the chain is Mitochondrial matrix. A helical transmembrane segment spans residues 63–82 (TIWTALPAITLIFIALPSLR). Over 83–227 (LLYLLDDSSD…LFIKWLSNMM (145 aa)) the chain is Mitochondrial intermembrane. Cu cation-binding residues include H161, C196, E198, C200, H204, and M207. Residue E198 coordinates Mg(2+).

This sequence belongs to the cytochrome c oxidase subunit 2 family. Component of the cytochrome c oxidase (complex IV, CIV), a multisubunit enzyme composed of a catalytic core of 3 subunits and several supernumerary subunits. The complex exists as a monomer or a dimer and forms supercomplexes (SCs) in the inner mitochondrial membrane with ubiquinol-cytochrome c oxidoreductase (cytochrome b-c1 complex, complex III, CIII). It depends on Cu cation as a cofactor.

The protein localises to the mitochondrion inner membrane. The enzyme catalyses 4 Fe(II)-[cytochrome c] + O2 + 8 H(+)(in) = 4 Fe(III)-[cytochrome c] + 2 H2O + 4 H(+)(out). Its function is as follows. Component of the cytochrome c oxidase, the last enzyme in the mitochondrial electron transport chain which drives oxidative phosphorylation. The respiratory chain contains 3 multisubunit complexes succinate dehydrogenase (complex II, CII), ubiquinol-cytochrome c oxidoreductase (cytochrome b-c1 complex, complex III, CIII) and cytochrome c oxidase (complex IV, CIV), that cooperate to transfer electrons derived from NADH and succinate to molecular oxygen, creating an electrochemical gradient over the inner membrane that drives transmembrane transport and the ATP synthase. Cytochrome c oxidase is the component of the respiratory chain that catalyzes the reduction of oxygen to water. Electrons originating from reduced cytochrome c in the intermembrane space (IMS) are transferred via the dinuclear copper A center (CU(A)) of subunit 2 and heme A of subunit 1 to the active site in subunit 1, a binuclear center (BNC) formed by heme A3 and copper B (CU(B)). The BNC reduces molecular oxygen to 2 water molecules using 4 electrons from cytochrome c in the IMS and 4 protons from the mitochondrial matrix. This Locusta migratoria (Migratory locust) protein is Cytochrome c oxidase subunit 2 (COII).